A 478-amino-acid polypeptide reads, in one-letter code: tRNA modification GTPase MnmE (478 aa).

(6S)-5-formyl-5,6,7,8-tetrahydrofolate is bound by residues Arg36, Glu94, and Lys133. In terms of domain architecture, TrmE-type G spans 230–402 (GIHVVLAGRP…LVETLCAKVG (173 aa)). Asn240 contributes to the K(+) binding site. Residues 240–245 (NAGKSS), 259–265 (TDVAGTT), and 284–287 (DTAG) each bind GTP. Ser244 is a binding site for Mg(2+). Residues Thr259, Val261, and Thr264 each coordinate K(+). Thr265 provides a ligand contact to Mg(2+). Lys478 is a (6S)-5-formyl-5,6,7,8-tetrahydrofolate binding site.

It belongs to the TRAFAC class TrmE-Era-EngA-EngB-Septin-like GTPase superfamily. TrmE GTPase family. As to quaternary structure, homodimer. Heterotetramer of two MnmE and two MnmG subunits. K(+) serves as cofactor.

The protein localises to the cytoplasm. Functionally, exhibits a very high intrinsic GTPase hydrolysis rate. Involved in the addition of a carboxymethylaminomethyl (cmnm) group at the wobble position (U34) of certain tRNAs, forming tRNA-cmnm(5)s(2)U34. This chain is tRNA modification GTPase MnmE, found in Psychrobacter arcticus (strain DSM 17307 / VKM B-2377 / 273-4).